The sequence spans 595 residues: MSTGDTVCMGWLIKSPPERKLQRYAWRKRWFVLRRGRMSGNPDVLEYYRNKHSNKPIRVIDLSECTVWKHAGPGFIRKEFQKNFVFIVKTTSRTFYLVAKTEEEMQVWVHSISQVCNFSHLEDGADSMESLSHMPSSFQPSPASSLHTVHVANSALLKDDRNTNSVVTEETRRESEFLFLPDYLILSNCETGRLHHASLPTRCDSWSNSNHSLAQTSFDDVFLDGLQPFISNNLVHPLHHGKVSQDFPSIRPQASLIWNREINGPSRNLMSSSPLLESSLNPTVHVEEKQVSLPSGVKELNIMSNTPPPRPPKPSYLSEQRQDQPLLTGHSSNKKPGYTMVPRRISLSGLDHVGSWKGDVQSQSLRHRDKRLSLNLPCKFSPIYPTASPSAEDSYVPMSPKGTASELRPHCSQDDYIPMSSSMLPELPADLEPPPVNRNLKPQRKSRPPPLDSRNLSTIQEHTSLTRTYTVPCNRTSFLSPQRNGINCARLFSTPSEEEEEEEEEEEEEEEEEKYIQMEEYGTVSSLSRSALSWTKKFSLDYLALDFNSTSPAPVQKKLLLSEEQRVDYVQVDEQKTQALRSTKQEWTDERQSKV.

A PH domain is found at 5–117 (DTVCMGWLIK…WVHSISQVCN (113 aa)). The disordered stretch occupies residues 295 to 339 (SGVKELNIMSNTPPPRPPKPSYLSEQRQDQPLLTGHSSNKKPGYT). Residues 317–331 (LSEQRQDQPLLTGHS) show a composition bias toward polar residues. Residue S346 is modified to Phosphoserine. Disordered stretches follow at residues 389-408 (PSAE…SELR) and 418-463 (PMSS…QEHT). Over residues 454 to 463 (RNLSTIQEHT) the composition is skewed to polar residues. The residue at position 480 (S480) is a Phosphoserine. Positions 493 to 513 (STPSEEEEEEEEEEEEEEEEE) are disordered. Over residues 496–513 (SEEEEEEEEEEEEEEEEE) the composition is skewed to acidic residues.

It belongs to the GAB family. Interacts with PIK3R/p85, SHP2 and GRAP2/MONA. May interact with Grb2. Post-translationally, phosphorylated on tyrosine residue(s) after macrophage colony-stimulating factor (M-CSF) receptor stimulation. In terms of tissue distribution, highly expressed in spleen and thymus and weakly in brain, heart, lung, kidney, uterus, and embryonic stem cells. Also expressed in myeloid and macrophage cell lines.

The protein is GRB2-associated-binding protein 3 (Gab3) of Mus musculus (Mouse).